Consider the following 382-residue polypeptide: Cysteine desulfurase IscS 1 (382 aa).

Asn149 is a binding site for pyridoxal 5'-phosphate. Cys321 (cysteine persulfide intermediate) is an active-site residue. Position 321 (Cys321) interacts with [2Fe-2S] cluster.

The protein belongs to the class-V pyridoxal-phosphate-dependent aminotransferase family. NifS/IscS subfamily. As to quaternary structure, homodimer. Forms a heterotetramer with IscU, interacts with other sulfur acceptors. Pyridoxal 5'-phosphate is required as a cofactor.

Its subcellular location is the cytoplasm. The catalysed reaction is (sulfur carrier)-H + L-cysteine = (sulfur carrier)-SH + L-alanine. The protein operates within cofactor biosynthesis; iron-sulfur cluster biosynthesis. In terms of biological role, master enzyme that delivers sulfur to a number of partners involved in Fe-S cluster assembly, tRNA modification or cofactor biosynthesis. Catalyzes the removal of elemental sulfur atoms from cysteine to produce alanine. Functions as a sulfur delivery protein for Fe-S cluster synthesis onto IscU, an Fe-S scaffold assembly protein, as well as other S acceptor proteins. This chain is Cysteine desulfurase IscS 1, found in Archaeoglobus fulgidus (strain ATCC 49558 / DSM 4304 / JCM 9628 / NBRC 100126 / VC-16).